We begin with the raw amino-acid sequence, 482 residues long: Glutamyl-tRNA(Gln) amidotransferase subunit A (482 aa).

Residues Lys80 and Ser159 each act as charge relay system in the active site. The Acyl-ester intermediate role is filled by Ser183.

This sequence belongs to the amidase family. GatA subfamily. As to quaternary structure, heterotrimer of A, B and C subunits.

The enzyme catalyses L-glutamyl-tRNA(Gln) + L-glutamine + ATP + H2O = L-glutaminyl-tRNA(Gln) + L-glutamate + ADP + phosphate + H(+). Allows the formation of correctly charged Gln-tRNA(Gln) through the transamidation of misacylated Glu-tRNA(Gln) in organisms which lack glutaminyl-tRNA synthetase. The reaction takes place in the presence of glutamine and ATP through an activated gamma-phospho-Glu-tRNA(Gln). The chain is Glutamyl-tRNA(Gln) amidotransferase subunit A from Neorickettsia sennetsu (strain ATCC VR-367 / Miyayama) (Ehrlichia sennetsu).